Reading from the N-terminus, the 130-residue chain is Small ribosomal subunit protein uS8 (130 aa).

It belongs to the universal ribosomal protein uS8 family. Part of the 30S ribosomal subunit. Contacts proteins S5 and S12.

One of the primary rRNA binding proteins, it binds directly to 16S rRNA central domain where it helps coordinate assembly of the platform of the 30S subunit. This chain is Small ribosomal subunit protein uS8, found in Actinobacillus pleuropneumoniae serotype 5b (strain L20).